Here is a 543-residue protein sequence, read N- to C-terminus: CTP synthase (543 aa).

The tract at residues 1 to 265 is amidoligase domain; the sequence is MARFIFITGG…DSEVLRAFGI (265 aa). Serine 13 lines the CTP pocket. A UTP-binding site is contributed by serine 13. 14-19 provides a ligand contact to ATP; that stretch reads SLGKGL. Residue tyrosine 54 participates in L-glutamine binding. Residue aspartate 71 participates in ATP binding. Mg(2+) contacts are provided by aspartate 71 and glutamate 139. CTP contacts are provided by residues 146–148, 186–191, and lysine 222; these read DIE and KTKPTQ. Residues 186–191 and lysine 222 contribute to the UTP site; that span reads KTKPTQ. A Glutamine amidotransferase type-1 domain is found at 291-542; it reads TIGVVGKYVS…IEAAVKQSRL (252 aa). Position 354 (glycine 354) interacts with L-glutamine. The active-site Nucleophile; for glutamine hydrolysis is the cysteine 381. Residues 382-385, glutamate 405, and arginine 470 contribute to the L-glutamine site; that span reads LGMQ. Residues histidine 515 and glutamate 517 contribute to the active site.

The protein belongs to the CTP synthase family. In terms of assembly, homotetramer.

The enzyme catalyses UTP + L-glutamine + ATP + H2O = CTP + L-glutamate + ADP + phosphate + 2 H(+). It carries out the reaction L-glutamine + H2O = L-glutamate + NH4(+). It catalyses the reaction UTP + NH4(+) + ATP = CTP + ADP + phosphate + 2 H(+). It participates in pyrimidine metabolism; CTP biosynthesis via de novo pathway; CTP from UDP: step 2/2. Allosterically activated by GTP, when glutamine is the substrate; GTP has no effect on the reaction when ammonia is the substrate. The allosteric effector GTP functions by stabilizing the protein conformation that binds the tetrahedral intermediate(s) formed during glutamine hydrolysis. Inhibited by the product CTP, via allosteric rather than competitive inhibition. Catalyzes the ATP-dependent amination of UTP to CTP with either L-glutamine or ammonia as the source of nitrogen. Regulates intracellular CTP levels through interactions with the four ribonucleotide triphosphates. The polypeptide is CTP synthase (Sphingopyxis alaskensis (strain DSM 13593 / LMG 18877 / RB2256) (Sphingomonas alaskensis)).